A 377-amino-acid polypeptide reads, in one-letter code: Putative F-box protein At3g13830 (377 aa).

Positions 6 to 52 constitute an F-box domain; the sequence is TTTMSTLPMVLVDEILSRVPITSLRSLRSTCKRWEAQSKTNLVGGKA.

The sequence is that of Putative F-box protein At3g13830 from Arabidopsis thaliana (Mouse-ear cress).